Reading from the N-terminus, the 472-residue chain is MRALLLFCFVASLLLSGQAEETEDVSEEVPMRDRSHIEKTLMLNEDKPTDDFSAVLQRLRKIYHSSIKPLEQSYKYNELRQHEITDGEITSKPMVLFLGPWSVGKSTMINYLLGLENTRYQLYTGAEPTTSEFTVLMHGPKLKTIEGIVMAADSARSFSPLEKFGQNFLEKLIGIEVPHKLLERVTFVDTPGIIENRKQQERGYPFNDVCQWFIDRADLIFVVFDPTKLDVGLELETLFRQLKGRESQIRIILNKADNLATQMLMRVYGALFWSLAPLINVTEPPRVYVSSFWPQEYKPDTHRELFLREEISLLEDLNQVIENRLENKIAFIRQHAIRVRIHALLVDRYLQTYKDKMTFFSDGELVFKDIVEDPDKFYIFKTILAKTNVSKFDLPNREAYKDFFGINPISSFKLLSQQCSYMGGCFLEKIERAITQELPSLLGSLGLGKNPGALNCDKTGCGETPKNRYKKH.

The signal sequence occupies residues 1 to 19 (MRALLLFCFVASLLLSGQA). One can recognise a Dynamin-type G domain in the interval 89-330 (ITSKPMVLFL…IENRLENKIA (242 aa)). The tract at residues 99–106 (GPWSVGKS) is G1 motif. Ser102 carries an N-linked (GlcNAc...) asparagine glycan. Residues 127 to 128 (EP) form a G2 motif region. Residues 189–192 (DTPG) are G3 motif. The G4 motif stretch occupies residues 254-257 (NKAD). Position 277 (Pro277) is a region of interest, G5 motif. Residues Asn280 and Asn388 are each glycosylated (N-linked (GlcNAc...) asparagine).

It belongs to the TRAFAC class dynamin-like GTPase superfamily. Dynamin/Fzo/YdjA family. Post-translationally, N-glycosylated. In terms of tissue distribution, detected in skeletal muscle.

It localises to the sarcoplasmic reticulum lumen. The protein localises to the sarcoplasmic reticulum membrane. The protein is Sarcalumenin (SRL) of Oryctolagus cuniculus (Rabbit).